The following is a 1120-amino-acid chain: Vacuolar cation-chloride cotransporter 1 (1120 aa).

Positions 1–21 (MVSRFYQIPGTHRPSSAISSS) are disordered. The Cytoplasmic segment spans residues 1 to 62 (MVSRFYQIPG…YDPDNPNKDK (62 aa)). S34 carries the post-translational modification Phosphoserine. A helical transmembrane segment spans residues 63-83 (LGTYDGVFVPTALNVLSILMF). Over 84–85 (LR) the chain is Vacuolar. The chain crosses the membrane as a helical span at residues 86 to 106 (FGFILGQLGIICTIGLLLLSY). The Cytoplasmic segment spans residues 107 to 145 (TINLLTTLSISAISTNGTVRGGGAYYMISRSLGPEFGGS). A helical membrane pass occupies residues 146–166 (IGLVFFLGQVFNAGMNAVGII). Residues 167-193 (EPLLYNLGYSAQGEPPAALGELLPRGH) are Vacuolar-facing. A helical membrane pass occupies residues 194–214 (WHEFTYATVILFLCFSVAFVG). Residues 215 to 221 (SQTVSRA) are Cytoplasmic-facing. A helical transmembrane segment spans residues 222–242 (GNILFLVLAASIFSIPLSALI). Topologically, residues 243 to 283 (RSPFTEGGISYTGPSWQTFHDNLLPHLTKGAAGSLLKGKET) are vacuolar. The helical transmembrane segment at 284–304 (FNDLFGVFFPATAGIFAGAGM) threads the bilayer. Topologically, residues 305-317 (SSELRKPSKSIPK) are cytoplasmic. A helical membrane pass occupies residues 318-338 (GTLWGLLFTFICYAVVVFSMG). Residues 339 to 360 (CSIPRRSLYDEVQIIQTISSVQ) are Vacuolar-facing. Residues 361–381 (WVIFMGEMATSLFSIIVGMLG) form a helical membrane-spanning segment. The Cytoplasmic portion of the chain corresponds to 382–393 (AAYVLEAIAKDN). Residues 394-414 (IIPGLEIFAHSPLYSLIFTWI) traverse the membrane as a helical segment. At 415–430 (LTQLCLFSDVNKIATF) the chain is on the vacuolar side. The helical transmembrane segment at 431–451 (ITMTFLMTFVVMNLACFLLGI) threads the bilayer. Residues 452-462 (SSAPNFRPSFK) are Cytoplasmic-facing. The helical transmembrane segment at 463–482 (YFNRYTTAIGALLSVVAMLI) threads the bilayer. At 483-487 (VDGIS) the chain is on the vacuolar side. The helical transmembrane segment at 488-506 (ASVLFLAMILLFLFIHYFS) threads the bilayer. At 507–1120 (PPKSWGDVSQ…SQTMTVTTAL (614 aa)) the chain is on the cytoplasmic side. 3 positions are modified to phosphoserine: S654, S915, and S918.

The protein belongs to the SLC12A transporter family.

Its subcellular location is the vacuole membrane. Its function is as follows. Catalyzes the coordinated symport of chloride with potassium ions across the vacuolar membrane. Involved in vacuolar osmoregulation. This Saccharomyces cerevisiae (strain ATCC 204508 / S288c) (Baker's yeast) protein is Vacuolar cation-chloride cotransporter 1.